Consider the following 474-residue polypeptide: Bifunctional protein HldE (474 aa).

The interval 1–318 (MKMTLPDFHC…ENAIRGRAET (318 aa)) is ribokinase. 195 to 198 (NLSE) is a binding site for ATP. The active site involves aspartate 264. Residues 344–474 (MTNGCFDILH…TNIIKAIKNQ (131 aa)) form a cytidylyltransferase region.

This sequence in the N-terminal section; belongs to the carbohydrate kinase PfkB family. It in the C-terminal section; belongs to the cytidylyltransferase family. In terms of assembly, homodimer.

The catalysed reaction is D-glycero-beta-D-manno-heptose 7-phosphate + ATP = D-glycero-beta-D-manno-heptose 1,7-bisphosphate + ADP + H(+). The enzyme catalyses D-glycero-beta-D-manno-heptose 1-phosphate + ATP + H(+) = ADP-D-glycero-beta-D-manno-heptose + diphosphate. It participates in nucleotide-sugar biosynthesis; ADP-L-glycero-beta-D-manno-heptose biosynthesis; ADP-L-glycero-beta-D-manno-heptose from D-glycero-beta-D-manno-heptose 7-phosphate: step 1/4. It functions in the pathway nucleotide-sugar biosynthesis; ADP-L-glycero-beta-D-manno-heptose biosynthesis; ADP-L-glycero-beta-D-manno-heptose from D-glycero-beta-D-manno-heptose 7-phosphate: step 3/4. The protein operates within bacterial outer membrane biogenesis; LPS core biosynthesis. In terms of biological role, catalyzes the phosphorylation of D-glycero-D-manno-heptose 7-phosphate at the C-1 position to selectively form D-glycero-beta-D-manno-heptose-1,7-bisphosphate. Its function is as follows. Catalyzes the ADP transfer from ATP to D-glycero-beta-D-manno-heptose 1-phosphate, yielding ADP-D-glycero-beta-D-manno-heptose. The sequence is that of Bifunctional protein HldE from Photorhabdus laumondii subsp. laumondii (strain DSM 15139 / CIP 105565 / TT01) (Photorhabdus luminescens subsp. laumondii).